Reading from the N-terminus, the 96-residue chain is RNA-binding protein Hfq (96 aa).

Residues Asp-9–Val-68 form the Sm domain.

It belongs to the Hfq family. In terms of assembly, homohexamer.

Functionally, RNA chaperone that binds small regulatory RNA (sRNAs) and mRNAs to facilitate mRNA translational regulation in response to envelope stress, environmental stress and changes in metabolite concentrations. Also binds with high specificity to tRNAs. In Histophilus somni (strain 129Pt) (Haemophilus somnus), this protein is RNA-binding protein Hfq.